The chain runs to 389 residues: TelA-like protein SH1505 (389 aa).

It belongs to the TelA family.

In Staphylococcus haemolyticus (strain JCSC1435), this protein is TelA-like protein SH1505.